A 110-amino-acid polypeptide reads, in one-letter code: DNA-binding protein PAE3044 (110 aa).

It belongs to the PDCD5 family.

This Pyrobaculum aerophilum (strain ATCC 51768 / DSM 7523 / JCM 9630 / CIP 104966 / NBRC 100827 / IM2) protein is DNA-binding protein PAE3044.